Reading from the N-terminus, the 525-residue chain is Glucose-6-phosphate isomerase (525 aa).

The active-site Proton donor is E356. Active-site residues include H387 and K502.

It belongs to the GPI family.

The protein localises to the cytoplasm. The catalysed reaction is alpha-D-glucose 6-phosphate = beta-D-fructose 6-phosphate. It functions in the pathway carbohydrate biosynthesis; gluconeogenesis. Its pathway is carbohydrate degradation; glycolysis; D-glyceraldehyde 3-phosphate and glycerone phosphate from D-glucose: step 2/4. In terms of biological role, catalyzes the reversible isomerization of glucose-6-phosphate to fructose-6-phosphate. The polypeptide is Glucose-6-phosphate isomerase (Treponema denticola (strain ATCC 35405 / DSM 14222 / CIP 103919 / JCM 8153 / KCTC 15104)).